We begin with the raw amino-acid sequence, 350 residues long: MDPGRVVFDSGVARRACPGGAQMLLFGGGGSANSGGFFRGVPAAVLGMDESRSSSSAAGAGAKRPFFTTHEELLEEEYYDEQAPEKKRRLTAEQVQMLERSFEEENKLEPERKTELARRLGMAPRQVAVWFQNRRARWKTKQLEHDFDRLKAAYDALAADHHALLSDNDRLRAQVISLTEKLQDKETSPSSATITTAAQEVDQPDEHTEAASTTGFATVDGALAAPPPGHQQPPHKDDLVSSGGTNDDGDGGGAAVVVFDVTEGANDRLSCESAYFADAAEAYERDCAGHYALSSEEEDGGAVSDEGCSFDLPDAAAAAAAMFGAAGVVHHDAADDEEAQLGSWTAWFWS.

Positions 83–142 form a DNA-binding region, homeobox; that stretch reads APEKKRRLTAEQVQMLERSFEEENKLEPERKTELARRLGMAPRQVAVWFQNRRARWKTKQ. Residues 141 to 185 are leucine-zipper; the sequence is KQLEHDFDRLKAAYDALAADHHALLSDNDRLRAQVISLTEKLQDK. The segment at 180–254 is disordered; sequence EKLQDKETSP…TNDDGDGGGA (75 aa). Positions 188–198 are enriched in low complexity; it reads SPSSATITTAA.

This sequence belongs to the HD-ZIP homeobox family. Class I subfamily. Homodimer. May form a heterodimer with HOX4. In terms of tissue distribution, expressed in seedlings, roots, leaves, nodes, internodes, flowers and embryo.

Its subcellular location is the nucleus. Probable transcription activator that binds to the DNA sequence 5'-CAAT[AT]ATTG-3'. This is Homeobox-leucine zipper protein HOX5 (HOX5) from Oryza sativa subsp. indica (Rice).